A 162-amino-acid chain; its full sequence is Caveolin-2 (162 aa).

Over 1–86 the chain is Cytoplasmic; the sequence is MGLETEKADV…FEISKYVMYK (86 aa). Tyr19 is modified (phosphotyrosine; by SRC). Phosphoserine is present on residues Ser20 and Ser23. Tyr27 is modified (phosphotyrosine; by SRC). Ser36 bears the Phosphoserine mark. The helical intramembrane region spans 87–107; it reads FLTVFLAIPLAFIAGILFATL. Residues 108 to 162 lie on the Cytoplasmic side of the membrane; that stretch reads SCLHIWILMPFVKTCLMVLPSVQTIWKSVTDVFIAPLCTSIGRSFSSVSLQLSQD.

It belongs to the caveolin family. Monomer or homodimer. Interacts with CAV1; the interaction forms a stable heterooligomeric complex that is required for targeting to lipid rafts and for caveolae formation. Tyrosine phosphorylated forms do not form heterooligomers with the Tyr-19-phosphorylated form existing as a monomer or dimer, and the Tyr-27-form as a monomer only. Interacts (tyrosine phosphorylated form) with the SH2 domain-containing proteins, RASA1, NCK1 and SRC. Interacts (tyrosine phosphorylated form) with INSR, the interaction (Tyr-27-phosphorylated form) is increased on insulin stimulation. Interacts (Tyr-19 phosphorylated form) with MAPK1 (phosphorylated form); the interaction, promoted by insulin, leads to nuclear location and MAPK1 activation. Interacts with STAT3; the interaction is increased on insulin-induced tyrosine phosphorylation leading to STAT activation. In terms of processing, phosphorylated on serine and tyrosine residues. CAV1 promotes phosphorylation on Ser-23 which then targets the complex to the plasma membrane, lipid rafts and caveolae. Phosphorylation on Ser-36 appears to modulate mitosis in endothelial cells. Phosphorylation on both Tyr-19 and Tyr-27 is required for insulin-induced 'Ser-727' phosphorylation of STAT3 and its activation. Phosphorylation on Tyr-19 is required for insulin-induced phosphorylation of MAPK1 and DNA binding of STAT3. Tyrosine phosphorylation is induced by both EGF and insulin (By. similarity).

Its subcellular location is the nucleus. The protein localises to the cytoplasm. It localises to the golgi apparatus membrane. The protein resides in the cell membrane. It is found in the membrane. Its subcellular location is the caveola. In terms of biological role, may act as a scaffolding protein within caveolar membranes. Interacts directly with G-protein alpha subunits and can functionally regulate their activity. Acts as an accessory protein in conjunction with CAV1 in targeting to lipid rafts and driving caveolae formation. The Ser-36 phosphorylated form has a role in modulating mitosis in endothelial cells. Positive regulator of cellular mitogenesis of the MAPK signaling pathway. Required for the insulin-stimulated nuclear translocation and activation of MAPK1 and STAT3, and the subsequent regulation of cell cycle progression. The polypeptide is Caveolin-2 (CAV2) (Papio anubis (Olive baboon)).